The chain runs to 673 residues: Leucine zipper putative tumor suppressor 3 (673 aa).

3 disordered regions span residues 1-157 (MAKL…CSEP), 172-239 (FHSM…QHLA), and 251-317 (IGTA…PPSP). The segment covering 79 to 92 (SRERPGRYPSEDKG) has biased composition (basic and acidic residues). Positions 173-186 (HSMQNLCPPQTNGT) are enriched in polar residues. Over residues 215–235 (GLSDSGRNSLTSLPTYSSSYS) the composition is skewed to low complexity. Positions 258 to 269 (SGSGGSSGGGSG) are enriched in gly residues. Residues 274 to 294 (GTSDSGRASSKSGSSSSMGRP) are compositionally biased toward low complexity. The segment covering 295–307 (GHLGSGEGGGGGL) has biased composition (gly residues). A phosphoserine mark is found at Ser316 and Ser318. 2 coiled-coil regions span residues 317-496 (PSAL…SLRD) and 571-639 (RALR…RLRE). The tract at residues 635 to 673 (RRLRERGAAGGASTPTPQHGEEKKAWTPSRLERIESTEI) is disordered. Basic and acidic residues predominate over residues 653 to 673 (HGEEKKAWTPSRLERIESTEI).

This sequence belongs to the LZTS3 family. As to quaternary structure, interacts (via C-terminus) with SHANK3 (via PDZ domain). Interacts (via coiled coil) with SIPA1L1. Can form homooligomers.

The protein resides in the synapse. It localises to the postsynaptic density. It is found in the cell projection. Its subcellular location is the dendritic spine. The protein localises to the dendrite. The protein resides in the cytoplasm. It localises to the cytoskeleton. Its function is as follows. May be involved in promoting the maturation of dendritic spines, probably via regulating SIPA1L1 levels at the postsynaptic density of synapses. The chain is Leucine zipper putative tumor suppressor 3 from Homo sapiens (Human).